The following is a 514-amino-acid chain: Membrane-bound lytic murein transglycosylase F (514 aa).

A signal peptide spans 1 to 30; that stretch reads MKKLKINYLFIGILTLLLAAALWPSIPWFG. Residues 31–269 form a non-LT domain region; it reads KTENHVAAIQ…RIEEKYLGHG (239 aa). An LT domain region spans residues 270 to 514; the sequence is DDFDYVDTRS…LFTPQKKEEK (245 aa). The active site involves glutamate 314.

The protein in the N-terminal section; belongs to the bacterial solute-binding protein 3 family. It in the C-terminal section; belongs to the transglycosylase Slt family.

It is found in the cell outer membrane. It carries out the reaction Exolytic cleavage of the (1-&gt;4)-beta-glycosidic linkage between N-acetylmuramic acid (MurNAc) and N-acetylglucosamine (GlcNAc) residues in peptidoglycan, from either the reducing or the non-reducing ends of the peptidoglycan chains, with concomitant formation of a 1,6-anhydrobond in the MurNAc residue.. Murein-degrading enzyme that degrades murein glycan strands and insoluble, high-molecular weight murein sacculi, with the concomitant formation of a 1,6-anhydromuramoyl product. Lytic transglycosylases (LTs) play an integral role in the metabolism of the peptidoglycan (PG) sacculus. Their lytic action creates space within the PG sacculus to allow for its expansion as well as for the insertion of various structures such as secretion systems and flagella. This Salmonella arizonae (strain ATCC BAA-731 / CDC346-86 / RSK2980) protein is Membrane-bound lytic murein transglycosylase F.